The primary structure comprises 538 residues: Eukaryotic translation initiation factor 3 subunit L (538 aa).

The 209-residue stretch at 305 to 513 folds into the PCI domain; the sequence is TFSDILLYIQ…IHIADTKVSH (209 aa).

It belongs to the eIF-3 subunit L family. In terms of assembly, component of the eukaryotic translation initiation factor 3 (eIF-3) complex. The eIF-3 complex interacts with pix.

The protein resides in the cytoplasm. In terms of biological role, component of the eukaryotic translation initiation factor 3 (eIF-3) complex, which is involved in protein synthesis of a specialized repertoire of mRNAs and, together with other initiation factors, stimulates binding of mRNA and methionyl-tRNAi to the 40S ribosome. The eIF-3 complex specifically targets and initiates translation of a subset of mRNAs involved in cell proliferation. This is Eukaryotic translation initiation factor 3 subunit L from Drosophila virilis (Fruit fly).